A 330-amino-acid polypeptide reads, in one-letter code: Glycerol-3-phosphate dehydrogenase [NAD(P)+] (330 aa).

NADPH contacts are provided by Ser-10, Trp-11, Arg-31, and Lys-105. Sn-glycerol 3-phosphate-binding residues include Lys-105, Gly-135, and Ser-137. Ala-139 contacts NADPH. Sn-glycerol 3-phosphate contacts are provided by Lys-190, Asp-243, Ser-253, Arg-254, and Asn-255. The Proton acceptor role is filled by Lys-190. NADPH is bound at residue Arg-254. Residues Val-278 and Glu-280 each contribute to the NADPH site.

It belongs to the NAD-dependent glycerol-3-phosphate dehydrogenase family.

The protein resides in the cytoplasm. It catalyses the reaction sn-glycerol 3-phosphate + NAD(+) = dihydroxyacetone phosphate + NADH + H(+). It carries out the reaction sn-glycerol 3-phosphate + NADP(+) = dihydroxyacetone phosphate + NADPH + H(+). It participates in membrane lipid metabolism; glycerophospholipid metabolism. Its function is as follows. Catalyzes the reduction of the glycolytic intermediate dihydroxyacetone phosphate (DHAP) to sn-glycerol 3-phosphate (G3P), the key precursor for phospholipid synthesis. This chain is Glycerol-3-phosphate dehydrogenase [NAD(P)+], found in Nitratidesulfovibrio vulgaris (strain DP4) (Desulfovibrio vulgaris).